A 357-amino-acid chain; its full sequence is Probable butyrate kinase 1 (357 aa).

This sequence belongs to the acetokinase family.

The protein localises to the cytoplasm. The enzyme catalyses butanoate + ATP = butanoyl phosphate + ADP. This is Probable butyrate kinase 1 from Caldanaerobacter subterraneus subsp. tengcongensis (strain DSM 15242 / JCM 11007 / NBRC 100824 / MB4) (Thermoanaerobacter tengcongensis).